The chain runs to 158 residues: Transcription elongation factor GreA (158 aa).

Residues 14 to 76 adopt a coiled-coil conformation; the sequence is VKKLEEELEY…QIENMLKNAN (63 aa).

Belongs to the GreA/GreB family.

Functionally, necessary for efficient RNA polymerase transcription elongation past template-encoded arresting sites. The arresting sites in DNA have the property of trapping a certain fraction of elongating RNA polymerases that pass through, resulting in locked ternary complexes. Cleavage of the nascent transcript by cleavage factors such as GreA or GreB allows the resumption of elongation from the new 3'terminus. GreA releases sequences of 2 to 3 nucleotides. In Clostridium acetobutylicum (strain ATCC 824 / DSM 792 / JCM 1419 / IAM 19013 / LMG 5710 / NBRC 13948 / NRRL B-527 / VKM B-1787 / 2291 / W), this protein is Transcription elongation factor GreA.